Consider the following 546-residue polypeptide: UDP-glycosyltransferase FPY2 (546 aa).

An N-terminal signal peptide occupies residues 1–20 (MSLPKAQILVVVTVGGSTNS). Residues 517–537 (LNNIDVALLFFILLGIISWIT) form a helical membrane-spanning segment.

Belongs to the glycosyltransferase 28 family.

The protein localises to the membrane. The protein operates within secondary metabolite biosynthesis. Functionally, UDP-glycosyltransferase; part of the gene cluster that mediates the biosynthesis of the gamma-pyrones fusapyrone (FPY) and deoxyfusapyrone (dFPY). FPY is an undecaketide and thus likely synthesized by the polyketide synthase FPY1 from acetyl-CoA functioning as starter unit and the addition of 10 malonyl-CoA extender units by successive Claisen-condensations. Next to this, FPY shares some rare features: C-glycosylated 4-deoxyglucose at C-3, a gem-dimethyl group at C-13, and an alpha-beta to beta-gamma double bond shift at C-20. During FPY biosynthesis mono-C-methyl groups are transferred to the tetra-, penta-, hexa- and heptaketide, while two C-methyl groups are transferred to the nonaketide, suggesting that the CMet domain is programmed to selectively catalyze two successive C-alpha-methylation reactions of the nonaketide, while other alpha-carbons are non- or mono-methylated only. While the origin of the 4'-deoxyglucose moiety remains opaque, its transfer to C-3 is most likely mediated by the C-glycosyltransferase FPY2. Next to this, the hydroxyl group present at C-33 and discriminating between FPY and dFPY, is likely to be installed by the cytochrome P450 monooxygenase FPY7. No putative function can be predicted for the remaining genes FPY3-FPY6. The sequence is that of UDP-glycosyltransferase FPY2 from Fusarium mangiferae (Mango malformation disease fungus).